Reading from the N-terminus, the 107-residue chain is U1-lycotoxin-Ls1k (107 aa).

The signal sequence occupies residues 1 to 20 (MMKVLVVVALLVTLISYSSS). A propeptide spanning residues 21-41 (EGIDDLEADELLSLMANEQTR) is cleaved from the precursor. Cystine bridges form between Cys-44–Cys-59, Cys-51–Cys-68, Cys-58–Cys-86, and Cys-70–Cys-84.

This sequence belongs to the neurotoxin 19 (CSTX) family. 04 (U1-Lctx) subfamily. Expressed by the venom gland.

It localises to the secreted. This is U1-lycotoxin-Ls1k from Lycosa singoriensis (Wolf spider).